We begin with the raw amino-acid sequence, 596 residues long: Aspartate--tRNA(Asp/Asn) ligase (596 aa).

Position 169 (glutamate 169) interacts with L-aspartate. An aspartate region spans residues 193–196; the sequence is QLFK. Arginine 215 serves as a coordination point for L-aspartate. Residues 215–217 and glutamine 224 each bind ATP; that span reads RDE. Histidine 447 contacts L-aspartate. Glutamate 481 contributes to the ATP binding site. L-aspartate is bound at residue arginine 488. 533–536 lines the ATP pocket; the sequence is GWDR. Positions 559–596 are disordered; sequence GYDPLTQAPAPITAQQRKEAGVDFKPEAKKADPGATKA. Residues 574–590 show a composition bias toward basic and acidic residues; sequence QRKEAGVDFKPEAKKAD.

It belongs to the class-II aminoacyl-tRNA synthetase family. Type 1 subfamily. As to quaternary structure, homodimer.

Its subcellular location is the cytoplasm. It carries out the reaction tRNA(Asx) + L-aspartate + ATP = L-aspartyl-tRNA(Asx) + AMP + diphosphate. Functionally, aspartyl-tRNA synthetase with relaxed tRNA specificity since it is able to aspartylate not only its cognate tRNA(Asp) but also tRNA(Asn). Reaction proceeds in two steps: L-aspartate is first activated by ATP to form Asp-AMP and then transferred to the acceptor end of tRNA(Asp/Asn). This Arthrobacter sp. (strain FB24) protein is Aspartate--tRNA(Asp/Asn) ligase.